The following is a 215-amino-acid chain: Pyridoxine/pyridoxamine 5'-phosphate oxidase (215 aa).

Substrate contacts are provided by residues 9–12 (RRDY) and lysine 69. Residues 64–69 (RVLLLK), 79–80 (FT), lysine 86, and glutamine 108 each bind FMN. The substrate site is built by tyrosine 126, arginine 130, and serine 134. FMN-binding positions include 143 to 144 (QS) and tryptophan 188. Position 194 to 196 (194 to 196 (RLH)) interacts with substrate. Position 198 (arginine 198) interacts with FMN.

The protein belongs to the pyridoxamine 5'-phosphate oxidase family. Homodimer. It depends on FMN as a cofactor.

The catalysed reaction is pyridoxamine 5'-phosphate + O2 + H2O = pyridoxal 5'-phosphate + H2O2 + NH4(+). The enzyme catalyses pyridoxine 5'-phosphate + O2 = pyridoxal 5'-phosphate + H2O2. The protein operates within cofactor metabolism; pyridoxal 5'-phosphate salvage; pyridoxal 5'-phosphate from pyridoxamine 5'-phosphate: step 1/1. It functions in the pathway cofactor metabolism; pyridoxal 5'-phosphate salvage; pyridoxal 5'-phosphate from pyridoxine 5'-phosphate: step 1/1. Functionally, catalyzes the oxidation of either pyridoxine 5'-phosphate (PNP) or pyridoxamine 5'-phosphate (PMP) into pyridoxal 5'-phosphate (PLP). The protein is Pyridoxine/pyridoxamine 5'-phosphate oxidase of Pseudomonas putida (strain W619).